Consider the following 318-residue polypeptide: tRNA U34 carboxymethyltransferase (318 aa).

Residues Lys88, Trp102, Lys107, Gly126, Met192, Tyr196, and Arg311 each contribute to the carboxy-S-adenosyl-L-methionine site.

It belongs to the class I-like SAM-binding methyltransferase superfamily. CmoB family. In terms of assembly, homotetramer.

The catalysed reaction is carboxy-S-adenosyl-L-methionine + 5-hydroxyuridine(34) in tRNA = 5-carboxymethoxyuridine(34) in tRNA + S-adenosyl-L-homocysteine + H(+). Catalyzes carboxymethyl transfer from carboxy-S-adenosyl-L-methionine (Cx-SAM) to 5-hydroxyuridine (ho5U) to form 5-carboxymethoxyuridine (cmo5U) at position 34 in tRNAs. The polypeptide is tRNA U34 carboxymethyltransferase (Pseudomonas fluorescens (strain ATCC BAA-477 / NRRL B-23932 / Pf-5)).